A 450-amino-acid polypeptide reads, in one-letter code: Allergen Fus c 3 (450 aa).

Disordered regions lie at residues 18–87 (EPEM…SRAQ), 99–148 (DLHA…HLPP), 185–377 (SGHP…NLVE), and 398–426 (QIRH…RRVS). Residues 31-46 (PHQQPISSPNRTSRNT) show a composition bias toward polar residues. The segment covering 101 to 112 (HAPSHPSHLSHG) has biased composition (low complexity). Residues 113–125 (APHEQEHAHEIQR) show a composition bias toward basic and acidic residues. Positions 272–286 (RPRKPARARRQKKEP) are enriched in basic residues. A compositionally biased stretch (polar residues) spans 291 to 304 (DASQGARSSSTGGT). The span at 305-341 (AHSVSDAASPSSTSHQSRASLTSKSASMTSAASTASS) shows a compositional bias: low complexity. Basic and acidic residues predominate over residues 356–377 (TLDKPNDTAEDRRTRASHNLVE). Residues 368–441 (RTRASHNLVE…EMARRHIEAL (74 aa)) enclose the bHLH domain.

In Fusarium culmorum, this protein is Allergen Fus c 3.